A 1358-amino-acid polypeptide reads, in one-letter code: DNA-directed RNA polymerase subunit beta (1358 aa).

Belongs to the RNA polymerase beta chain family. The RNAP catalytic core consists of 2 alpha, 1 beta, 1 beta' and 1 omega subunit. When a sigma factor is associated with the core the holoenzyme is formed, which can initiate transcription.

The enzyme catalyses RNA(n) + a ribonucleoside 5'-triphosphate = RNA(n+1) + diphosphate. Its function is as follows. DNA-dependent RNA polymerase catalyzes the transcription of DNA into RNA using the four ribonucleoside triphosphates as substrates. This chain is DNA-directed RNA polymerase subunit beta, found in Thioalkalivibrio sulfidiphilus (strain HL-EbGR7).